The chain runs to 368 residues: Agmatine deiminase (368 aa).

The active-site Amidino-cysteine intermediate is the cysteine 357.

It belongs to the agmatine deiminase family. Homodimer.

It catalyses the reaction agmatine + H2O = N-carbamoylputrescine + NH4(+). The protein operates within amine and polyamine biosynthesis; putrescine biosynthesis via agmatine pathway; N-carbamoylputrescine from agmatine: step 1/1. Functionally, mediates the hydrolysis of agmatine into N-carbamoylputrescine in the arginine decarboxylase (ADC) pathway of putrescine biosynthesis, a basic polyamine. The protein is Agmatine deiminase of Pseudomonas fluorescens (strain SBW25).